Consider the following 223-residue polypeptide: Endonuclease NucS (223 aa).

It belongs to the NucS endonuclease family.

It localises to the cytoplasm. Cleaves both 3' and 5' ssDNA extremities of branched DNA structures. The chain is Endonuclease NucS from Mycolicibacterium gilvum (strain PYR-GCK) (Mycobacterium gilvum (strain PYR-GCK)).